A 412-amino-acid chain; its full sequence is Lysosomal phospholipase A and acyltransferase (412 aa).

Positions 1–33 are cleaved as a signal peptide; that stretch reads MDRHLCTCRETQLRSGLLLPLFLLMMLADLTLP. Residue Asp-46 participates in substrate binding. An intrachain disulfide couples Cys-65 to Cys-89. N-linked (GlcNAc...) asparagine glycosylation is present at Asn-99. Ser-198 serves as the catalytic Acyl-ester intermediate. Ser-198 provides a ligand contact to Zn(2+). Residue Met-199 participates in substrate binding. Residues Asn-273 and Asn-289 are each glycosylated (N-linked (GlcNAc...) asparagine). Zn(2+) is bound at residue Cys-355. Catalysis depends on charge relay system residues Asp-360 and His-392. His-392 is a Zn(2+) binding site. Asn-398 carries N-linked (GlcNAc...) asparagine glycosylation.

It belongs to the AB hydrolase superfamily. Lipase family. N-glycosylated. N-glycosylation is important for maturation of the enzyme and normal subcellular location. In terms of tissue distribution, detected in blood plasma. Detected in alveolar macrophages (at protein level). Detected in heart, liver, spleen, kidney, thymus, brain and lung.

Its subcellular location is the secreted. It is found in the lysosome. It localises to the membrane. The catalysed reaction is a 1,2-diacyl-sn-glycero-3-phosphocholine + H2O = a 2-acyl-sn-glycero-3-phosphocholine + a fatty acid + H(+). It carries out the reaction 1-hexadecanoyl-2-(9Z-octadecenoyl)-sn-glycero-3-phosphocholine + H2O = 2-(9Z-octadecenoyl)-sn-glycero-3-phosphocholine + hexadecanoate + H(+). The enzyme catalyses 1,2-di-(9Z-octadecenoyl)-sn-glycero-3-phosphocholine + H2O = 2-(9Z-octadecenoyl)-sn-glycero-3-phosphocholine + (9Z)-octadecenoate + H(+). It catalyses the reaction 1-hexadecanoyl-2-glutaroyl-sn-glycero-3-phosphocholine + H2O = 2-glutaroyl-sn-glycero-3-phosphocholine + hexadecanoate + H(+). The catalysed reaction is 1-hexadecanoyl-2-nonadioyl-sn-glycero-3-phosphocholine + H2O = 2-nonadioyl-sn-glycero-3-phosphocholine + hexadecanoate + H(+). It carries out the reaction 1-hexadecanoyl-2-(5-oxopentanoyl)-sn-glycero-3-phosphocholine + H2O = 2-(5-oxopentanoyl)-sn-glycero-3-phosphocholine + hexadecanoate + H(+). The enzyme catalyses 1-hexadecanoyl-2-(9-oxononanoyl)-sn-glycero-3-phosphocholine + H2O = 2-(9-oxononanoyl)-sn-glycero-3-phosphocholine + hexadecanoate + H(+). It catalyses the reaction 1,2-dihexadecanoyl-sn-glycero-3-phosphocholine + H2O = 2-hexadecanoyl-sn-glycero-3-phosphocholine + hexadecanoate + H(+). The catalysed reaction is a 1,2-diacyl-sn-glycero-3-phosphocholine + H2O = a 1-acyl-sn-glycero-3-phosphocholine + a fatty acid + H(+). It carries out the reaction 1-hexadecanoyl-2-(9Z-octadecenoyl)-sn-glycero-3-phosphocholine + H2O = 1-hexadecanoyl-sn-glycero-3-phosphocholine + (9Z)-octadecenoate + H(+). The enzyme catalyses 1,2-di-(9Z-octadecenoyl)-sn-glycero-3-phosphocholine + H2O = 1-(9Z-octadecenoyl)-sn-glycero-3-phosphocholine + (9Z)-octadecenoate + H(+). It catalyses the reaction 1,2-dihexadecanoyl-sn-glycero-3-phosphocholine + H2O = 1-hexadecanoyl-sn-glycero-3-phosphocholine + hexadecanoate + H(+). The catalysed reaction is a 1-acyl-sn-glycero-3-phosphocholine + H2O = sn-glycerol 3-phosphocholine + a fatty acid + H(+). It carries out the reaction 1-hexadecanoyl-sn-glycero-3-phosphocholine + H2O = sn-glycerol 3-phosphocholine + hexadecanoate + H(+). The enzyme catalyses N-(acetyl)-sphing-4-enine + a 1,2-diacyl-sn-glycero-3-phosphoethanolamine = 1-O-acyl-N-(acetyl)-sphing-4-enine + a 2-acyl-sn-glycero-3-phosphoethanolamine. It catalyses the reaction 1-hexadecanoyl-2-(9Z-octadecenoyl)-sn-glycero-3-phosphoethanolamine + N-(acetyl)-sphing-4-enine = 2-(9Z-octadecenoyl)-sn-glycero-3-phosphoethanolamine + 1-hexadecanoyl-N-(acetyl)-sphing-4-enine. The catalysed reaction is 1-hexadecanoyl-2-(9Z,12Z-octadecadienoyl)-sn-glycero-3-phosphoethanolamine + N-(acetyl)-sphing-4-enine = 2-(9Z,12Z)-octadecadienoyl-sn-glycero-3-phosphoethanolamine + 1-hexadecanoyl-N-(acetyl)-sphing-4-enine. It carries out the reaction 1-hexadecanoyl-2-(5Z,8Z,11Z,14Z-eicosatetraenoyl)-sn-glycero-3-phosphoethanolamine + N-(acetyl)-sphing-4-enine = 2-(5Z,8Z,11Z,14Z)-eicosatetraenoyl-sn-glycero-3-phosphoethanolamine + 1-hexadecanoyl-N-(acetyl)-sphing-4-enine. The enzyme catalyses N-(acetyl)-sphing-4-enine + a 1,2-diacyl-sn-glycero-3-phosphoethanolamine = 1-O-acyl-N-(acetyl)-sphing-4-enine + a 1-acyl-sn-glycero-3-phosphoethanolamine. It catalyses the reaction 1-hexadecanoyl-2-(9Z-octadecenoyl)-sn-glycero-3-phosphoethanolamine + N-(acetyl)-sphing-4-enine = 1-(9Z-octadecenoyl)-N-(acetyl)-sphing-4-enine + 1-hexadecanoyl-sn-glycero-3-phosphoethanolamine. The catalysed reaction is 1-hexadecanoyl-2-(9Z,12Z-octadecadienoyl)-sn-glycero-3-phosphoethanolamine + N-(acetyl)-sphing-4-enine = 1-(9Z,12Z-octadecadienoyl)-N-acetylsphing-4-enine + 1-hexadecanoyl-sn-glycero-3-phosphoethanolamine. It carries out the reaction 1-hexadecanoyl-2-(5Z,8Z,11Z,14Z-eicosatetraenoyl)-sn-glycero-3-phosphoethanolamine + N-(acetyl)-sphing-4-enine = 1-(5Z,8Z,11Z,14Z)-eicosatetraenoyl-N-(acetyl)-sphing-4-enine + 1-hexadecanoyl-sn-glycero-3-phosphoethanolamine. The enzyme catalyses N-(acetyl)-sphing-4-enine + a 1,2-diacyl-sn-glycero-3-phosphocholine = 1-O-acyl-N-(acetyl)-sphing-4-enine + a 2-acyl-sn-glycero-3-phosphocholine. It catalyses the reaction 1-hexadecanoyl-2-(9Z-octadecenoyl)-sn-glycero-3-phosphocholine + N-(acetyl)-sphing-4-enine = 1-hexadecanoyl-N-(acetyl)-sphing-4-enine + 2-(9Z-octadecenoyl)-sn-glycero-3-phosphocholine. The catalysed reaction is 1-hexadecanoyl-2-(9Z,12Z-octadecadienoyl)-sn-glycero-3-phosphocholine + N-(acetyl)-sphing-4-enine = 2-(9Z,12Z-octadecadienoyl)-sn-glycero-3-phosphocholine + 1-hexadecanoyl-N-(acetyl)-sphing-4-enine. It carries out the reaction 1-hexadecanoyl-2-(5Z,8Z,11Z,14Z-eicosatetraenoyl)-sn-glycero-3-phosphocholine + N-(acetyl)-sphing-4-enine = 1-hexadecanoyl-N-(acetyl)-sphing-4-enine + 2-(5Z,8Z,11Z,14Z)-eicosatetraenoyl-sn-glycero-3-phosphocholine. The enzyme catalyses 1-hexadecanoyl-2-(4Z,7Z,10Z,13Z,16Z,19Z-docosahexaenoyl)-sn-glycero-3-phosphocholine + N-(acetyl)-sphing-4-enine = 2-(4Z,7Z,10Z,13Z,16Z,19Z-docosahexaenoyl)-sn-glycero-3-phosphocholine + 1-hexadecanoyl-N-(acetyl)-sphing-4-enine. It catalyses the reaction 1-hexadecanoyl-2-nonadioyl-sn-glycero-3-phosphocholine + N-(acetyl)-sphing-4-enine = 2-nonadioyl-sn-glycero-3-phosphocholine + 1-hexadecanoyl-N-(acetyl)-sphing-4-enine. The catalysed reaction is 1-octadecanoyl-2-(9Z-octadecenoyl)-sn-glycero-3-phosphocholine + N-(acetyl)-sphing-4-enine = 1-octadecanoyl-N-(acetyl)-sphing-4-enine + 2-(9Z-octadecenoyl)-sn-glycero-3-phosphocholine. It carries out the reaction 1-(9Z)-octadecenoyl-2-octadecanoyl-sn-glycero-3-phosphocholine + N-(acetyl)-sphing-4-enine = 2-octadecanoyl-sn-glycero-3-phosphocholine + 1-(9Z-octadecenoyl)-N-(acetyl)-sphing-4-enine. The enzyme catalyses 1-octadecanoyl-2-(5Z,8Z,11Z,14Z-eicosatetraenoyl)-sn-glycero-3-phosphocholine + N-(acetyl)-sphing-4-enine = 1-octadecanoyl-N-(acetyl)-sphing-4-enine + 2-(5Z,8Z,11Z,14Z)-eicosatetraenoyl-sn-glycero-3-phosphocholine. It catalyses the reaction 1-(9Z-octadecenoyl)-2-hexadecanoyl-sn-glycero-3-phosphocholine + N-(acetyl)-sphing-4-enine = 1-(9Z-octadecenoyl)-N-(acetyl)-sphing-4-enine + 2-hexadecanoyl-sn-glycero-3-phosphocholine. The catalysed reaction is N-(acetyl)-sphing-4-enine + a 1,2-diacyl-sn-glycero-3-phosphocholine = 1-O-acyl-N-(acetyl)-sphing-4-enine + a 1-acyl-sn-glycero-3-phosphocholine. It carries out the reaction 1-hexadecanoyl-2-(9Z-octadecenoyl)-sn-glycero-3-phosphocholine + N-(acetyl)-sphing-4-enine = 1-(9Z-octadecenoyl)-N-(acetyl)-sphing-4-enine + 1-hexadecanoyl-sn-glycero-3-phosphocholine. The enzyme catalyses 1-hexadecanoyl-2-(9Z,12Z-octadecadienoyl)-sn-glycero-3-phosphocholine + N-(acetyl)-sphing-4-enine = 1-(9Z,12Z-octadecadienoyl)-N-acetylsphing-4-enine + 1-hexadecanoyl-sn-glycero-3-phosphocholine. It catalyses the reaction 1-hexadecanoyl-2-(5Z,8Z,11Z,14Z-eicosatetraenoyl)-sn-glycero-3-phosphocholine + N-(acetyl)-sphing-4-enine = 1-(5Z,8Z,11Z,14Z)-eicosatetraenoyl-N-(acetyl)-sphing-4-enine + 1-hexadecanoyl-sn-glycero-3-phosphocholine. The catalysed reaction is 1-hexadecanoyl-2-(4Z,7Z,10Z,13Z,16Z,19Z-docosahexaenoyl)-sn-glycero-3-phosphocholine + N-(acetyl)-sphing-4-enine = 1-(4Z,7Z,10Z,13Z,16Z,19Z-docosahexaenoyl)-N-(acetyl)-sphing-4-enine + 1-hexadecanoyl-sn-glycero-3-phosphocholine. It carries out the reaction 1-octadecanoyl-2-(9Z-octadecenoyl)-sn-glycero-3-phosphocholine + N-(acetyl)-sphing-4-enine = 1-(9Z-octadecenoyl)-N-(acetyl)-sphing-4-enine + 1-octadecanoyl-sn-glycero-3-phosphocholine. The enzyme catalyses 1-octadecanoyl-2-(9Z,12Z)-octadecadienoyl-sn-glycero-3-phosphocholine + N-(acetyl)-sphing-4-enine = 1-(9Z,12Z-octadecadienoyl)-N-acetylsphing-4-enine + 1-octadecanoyl-sn-glycero-3-phosphocholine. It catalyses the reaction 1-(9Z-octadecenoyl)-2-hexadecanoyl-sn-glycero-3-phosphocholine + N-(acetyl)-sphing-4-enine = 1-hexadecanoyl-N-(acetyl)-sphing-4-enine + 1-(9Z-octadecenoyl)-sn-glycero-3-phosphocholine. The catalysed reaction is 1-(9Z)-octadecenoyl-2-octadecanoyl-sn-glycero-3-phosphocholine + N-(acetyl)-sphing-4-enine = 1-octadecanoyl-N-(acetyl)-sphing-4-enine + 1-(9Z-octadecenoyl)-sn-glycero-3-phosphocholine. It carries out the reaction 1,2-di-(9Z-octadecenoyl)-sn-glycero-3-phosphocholine + N-(acetyl)-sphing-4-enine = 1-(9Z-octadecenoyl)-N-(acetyl)-sphing-4-enine + 1-(9Z-octadecenoyl)-sn-glycero-3-phosphocholine. The enzyme catalyses 1-octadecanoyl-2-(5Z,8Z,11Z,14Z-eicosatetraenoyl)-sn-glycero-3-phosphocholine + N-(acetyl)-sphing-4-enine = 1-(5Z,8Z,11Z,14Z)-eicosatetraenoyl-N-(acetyl)-sphing-4-enine + 1-octadecanoyl-sn-glycero-3-phosphocholine. It catalyses the reaction a 1,2-diacyl-sn-glycero-3-phospho-L-serine + N-(acetyl)-sphing-4-enine = a 2-acyl-sn-glycero-3-phospho-L-serine + 1-O-acyl-N-(acetyl)-sphing-4-enine. The catalysed reaction is 1-octadecanoyl-2-(9Z-octadecenoyl)-sn-glycero-3-phospho-L-serine + N-(acetyl)-sphing-4-enine = 2-(9Z-octadecenoyl)-sn-glycero-3-phospho-L-serine + 1-octadecanoyl-N-(acetyl)-sphing-4-enine. It carries out the reaction a 1,2-diacyl-sn-glycero-3-phospho-L-serine + N-(acetyl)-sphing-4-enine = 1-O-acyl-N-(acetyl)-sphing-4-enine + a 1-acyl-sn-glycero-3-phospho-L-serine. The enzyme catalyses 1-octadecanoyl-2-(9Z-octadecenoyl)-sn-glycero-3-phospho-L-serine + N-(acetyl)-sphing-4-enine = 1-octadecanoyl-sn-glycero-3-phosphoserine + 1-(9Z-octadecenoyl)-N-(acetyl)-sphing-4-enine. It catalyses the reaction a 1,2-diacyl-sn-glycero-3-phospho-(1'-sn-glycerol) + N-(acetyl)-sphing-4-enine = 2-acyl-sn-glycero-3-phospho-(1'-sn-glycerol) + 1-O-acyl-N-(acetyl)-sphing-4-enine. The catalysed reaction is 1-octadecanoyl-2-(9Z-octadecenoyl)-sn-glycero-3-phospho-(1'-sn-glycerol) + N-(acetyl)-sphing-4-enine = 2-(9Z-octadecenoyl)-sn-glycero-3-phospho-(1'-sn-glycerol) + 1-octadecanoyl-N-(acetyl)-sphing-4-enine. It carries out the reaction a 1,2-diacyl-sn-glycero-3-phospho-(1'-sn-glycerol) + N-(acetyl)-sphing-4-enine = 1-O-acyl-N-(acetyl)-sphing-4-enine + 1-acyl-sn-glycero-3-phospho-(1'-sn-glycerol). The enzyme catalyses 1-octadecanoyl-2-(9Z-octadecenoyl)-sn-glycero-3-phospho-(1'-sn-glycerol) + N-(acetyl)-sphing-4-enine = 1-octadecanoyl-sn-glycero-3-phospho-(1'-sn-glycerol) + 1-(9Z-octadecenoyl)-N-(acetyl)-sphing-4-enine. It catalyses the reaction an N-acylethanolamine + a 1,2-diacyl-sn-glycero-3-phosphocholine = 2-(acylamino)ethyl fatty acid + a 2-acyl-sn-glycero-3-phosphocholine. The catalysed reaction is an N-acylethanolamine + a 1,2-diacyl-sn-glycero-3-phosphocholine = 2-(acylamino)ethyl fatty acid + a 1-acyl-sn-glycero-3-phosphocholine. It carries out the reaction N-(5Z,8Z,11Z,14Z-eicosatetraenoyl)-ethanolamine + 1,2-di-(9Z-octadecenoyl)-sn-glycero-3-phosphocholine = 2-[(5Z,8Z,11Z,14Z)-eicosatetraenoylamino]ethyl (9Z)-octadecenoate + (9Z-octadecenoyl)-sn-glycero-3-phosphocholine. The enzyme catalyses N-(9Z-octadecenoyl) ethanolamine + 1,2-di-(9Z-octadecenoyl)-sn-glycero-3-phosphocholine = 2-[(9Z)-octadecenoylamino]ethyl (9Z)-octadecenoate + (9Z-octadecenoyl)-sn-glycero-3-phosphocholine. It catalyses the reaction a 3-acyl-sn-glycerol + a 1,2-diacyl-sn-glycero-3-phosphocholine = a 1,3-diacylglycerol + a 1-acyl-sn-glycero-3-phosphocholine. The catalysed reaction is a 3-acyl-sn-glycerol + a 1,2-diacyl-sn-glycero-3-phosphocholine = a 1,3-diacylglycerol + a 2-acyl-sn-glycero-3-phosphocholine. It carries out the reaction 3-(9Z-octadecenoyl)-sn-glycerol + 1,2-di-(9Z-octadecenoyl)-sn-glycero-3-phosphocholine = 1,3-di-(9Z-octadecenoyl)-glycerol + (9Z-octadecenoyl)-sn-glycero-3-phosphocholine. The enzyme catalyses 3-hexadecanoyl-sn-glycerol + 1,2-di-(9Z-octadecenoyl)-sn-glycero-3-phosphocholine = 1-(9Z)-octadecenoyl-3-hexadecanoyl-sn-glycerol + (9Z-octadecenoyl)-sn-glycero-3-phosphocholine. It catalyses the reaction a 1-acyl-sn-glycerol + a 1,2-diacyl-sn-glycero-3-phosphocholine = a 1,3-diacylglycerol + a 2-acyl-sn-glycero-3-phosphocholine. The catalysed reaction is a 1-acyl-sn-glycerol + a 1,2-diacyl-sn-glycero-3-phosphocholine = a 1,3-diacylglycerol + a 1-acyl-sn-glycero-3-phosphocholine. It carries out the reaction 1-(9Z-octadecenoyl)-sn-glycerol + 1,2-di-(9Z-octadecenoyl)-sn-glycero-3-phosphocholine = 1,3-di-(9Z-octadecenoyl)-glycerol + (9Z-octadecenoyl)-sn-glycero-3-phosphocholine. The enzyme catalyses 1-hexadecanoyl-sn-glycerol + 1,2-di-(9Z-octadecenoyl)-sn-glycero-3-phosphocholine = 1-hexadecanoyl-3-(9Z)-octadecenoyl-sn-glycerol + (9Z-octadecenoyl)-sn-glycero-3-phosphocholine. It catalyses the reaction a 2-acylglycerol + a 1,2-diacyl-sn-glycero-3-phosphocholine = a 1,2-diacylglycerol + a 2-acyl-sn-glycero-3-phosphocholine. The catalysed reaction is a 2-acylglycerol + a 1,2-diacyl-sn-glycero-3-phosphocholine = a 1,2-diacylglycerol + a 1-acyl-sn-glycero-3-phosphocholine. It carries out the reaction 2-hexadecanoylglycerol + 1,2-di-(9Z-octadecenoyl)-sn-glycero-3-phosphocholine = 1-(9Z)-octadecenoyl-2-hexadecanoylglycerol + (9Z-octadecenoyl)-sn-glycero-3-phosphocholine. The enzyme catalyses 1-O-alkylglycerol + a 1,2-diacyl-sn-glycero-3-phosphocholine = 1-O-alkyl-3-acylglycerol + a 1-acyl-sn-glycero-3-phosphocholine. It catalyses the reaction 1-O-alkylglycerol + a 1,2-diacyl-sn-glycero-3-phosphocholine = 1-O-alkyl-3-acylglycerol + a 2-acyl-sn-glycero-3-phosphocholine. The catalysed reaction is 1-O-hexadecylglycerol + 1,2-di-(9Z-octadecenoyl)-sn-glycero-3-phosphocholine = 1-O-hexadecyl-3-(9Z)-octadecenoylglycerol + (9Z-octadecenoyl)-sn-glycero-3-phosphocholine. It carries out the reaction 1-O-alkyl-2-acyl-sn-glycerol + a 1,2-diacyl-sn-glycero-3-phosphocholine = 1-O-alkyl-2,3-diacyl-sn-glycerol + a 2-acyl-sn-glycero-3-phosphocholine. The enzyme catalyses 1-O-alkyl-2-acyl-sn-glycerol + a 1,2-diacyl-sn-glycero-3-phosphocholine = 1-O-alkyl-2,3-diacyl-sn-glycerol + a 1-acyl-sn-glycero-3-phosphocholine. It catalyses the reaction 1-O-hexadecyl-2-acetyl-sn-glycerol + 1,2-di-(9Z-octadecenoyl)-sn-glycero-3-phosphocholine = 1-O-hexadecyl-2-acetyl-3-(9Z)-octadecenoyl-sn-glycerol + (9Z-octadecenoyl)-sn-glycero-3-phosphocholine. The catalysed reaction is 1-O-hexadecyl-2-O-methyl-sn-glycerol + 1,2-di-(9Z-octadecenoyl)-sn-glycero-3-phosphocholine = 1-O-hexadecyl-2-O-methyl-3-(9Z)-octadecenoyl-sn-glycerol + (9Z-octadecenoyl)-sn-glycero-3-phosphocholine. It carries out the reaction a 1,2-diacyl-sn-glycero-3-phosphoethanolamine + H2O = a 1-acyl-sn-glycero-3-phosphoethanolamine + a fatty acid + H(+). The enzyme catalyses 1-acyl-2-(5Z,8Z,11Z,14Z)-eicosatetraenoyl-sn-glycero-3-phosphoethanolamine + H2O = a 1-acyl-sn-glycero-3-phosphoethanolamine + (5Z,8Z,11Z,14Z)-eicosatetraenoate + H(+). It catalyses the reaction a 1,2-diacyl-sn-glycero-3-phospho-(1'-sn-glycerol) + H2O = 1-acyl-sn-glycero-3-phospho-(1'-sn-glycerol) + a fatty acid + H(+). The catalysed reaction is 1-hexadecanoyl-2-(9Z-octadecenoyl)-sn-glycero-3-phospho-(1'-sn-glycerol) + H2O = 1-hexadecanoyl-sn-glycero-3-phospho-(1'-sn-glycerol) + (9Z)-octadecenoate + H(+). It carries out the reaction a 1,2-diacyl-sn-glycero-3-phospho-(1'-sn-glycerol) + H2O = 2-acyl-sn-glycero-3-phospho-(1'-sn-glycerol) + a fatty acid + H(+). The enzyme catalyses 1-hexadecanoyl-2-(9Z-octadecenoyl)-sn-glycero-3-phospho-(1'-sn-glycerol) + H2O = 2-(9Z-octadecenoyl)-sn-glycero-3-phospho-(1'-sn-glycerol) + hexadecanoate + H(+). With respect to regulation, phospholipase sn-2 versus sn-1 positional specificity is affected by the phospholipid composition of membranes. Phospholipase A2 activity toward 1-hexadecanoyl-2-(5Z,8Z,11Z,14Z-eicosatetraenoyl)-sn-glycero-3-phosphocholine (PAPE) is enhanced in the presence of 1,2-dioleoyl-sn-glycero-3-phosphocholine (DOPC), which promotes lipid bilayer formation. O-acyltransferase activity is inhibited by antiarrhythmic drug amiodarone. In terms of biological role, has dual calcium-independent phospholipase and O-acyltransferase activities with a potential role in glycerophospholipid homeostasis and remodeling of acyl groups of lipophilic alcohols present in acidic cellular compartments. Catalyzes hydrolysis of the ester bond of the fatty acyl group attached at sn-1 or sn-2 position of phospholipids (phospholipase A1 or A2 activity) and transfer it to the hydroxyl group at the first carbon of lipophilic alcohols (O-acyltransferase activity). Among preferred fatty acyl donors are phosphatidylcholines, phosphatidylethanolamines, phosphatidylglycerols and phosphatidylserines. Favors sn-2 over sn-1 deacylation of unsaturated fatty acyl groups of phosphatidylcholines, phosphatidylethanolamines, and phosphatidylglycerols. Among preferred fatty acyl acceptors are natural lipophilic alcohols including short-chain ceramide N-acetyl-sphingosine (C2 ceramide), alkylacylglycerols, monoacylglycerols, and acylethanolamides such as anandamide and oleoylethanolamide. Selectively hydrolyzes the sn-1 fatty acyl group of truncated oxidized phospholipids and may play a role in detoxification of reactive oxidized phospholipids during oxidative stress. Required for normal phospholipid degradation in alveolar macrophages with potential implications in the clearance of pulmonary surfactant, which is mainly composed of dipalmitoylphosphatidylcholine (1,2-dihexadecanoyl-sn-glycero-3-phosphocholine). Involved in the first step of bis(monoacylglycero)phosphate (BMP) de novo synthesis from phosphatidylglycerol (1,2-diacyl-sn-glycero-3-phospho-(1'-sn-glycerol), PG). BMP is an important player in cargo sorting and degradation, regulation of cellular cholesterol levels and intercellular communication. At neutral pH, hydrolyzes the sn-1 fatty acyl group of the lysophosphatidylcholines. The chain is Lysosomal phospholipase A and acyltransferase from Mus musculus (Mouse).